The chain runs to 632 residues: Putative acetyl-CoA decarbonylase/synthase complex subunit alpha-like (632 aa).

Positions 200, 226, 263, 379, 408, and 438 each coordinate [Ni-4Fe-4S] cluster.

It belongs to the Ni-containing carbon monoxide dehydrogenase family.

Its function is as follows. Part of the ACDS complex that catalyzes the reversible cleavage of acetyl-CoA, allowing autotrophic growth from CO(2). The alpha-epsilon subcomponent functions as a carbon monoxide dehydrogenase. This Methanopyrus kandleri (strain AV19 / DSM 6324 / JCM 9639 / NBRC 100938) protein is Putative acetyl-CoA decarbonylase/synthase complex subunit alpha-like (cdhA2).